A 329-amino-acid polypeptide reads, in one-letter code: NAC domain-containing protein 71 (329 aa).

One can recognise an NAC domain in the interval 9-166; it reads LPPGFRFHPT…DWVLCRIYNK (158 aa). Residues 228–281 are disordered; that stretch reads RSGSADRDSMPRLHTDSSGSEHVLSPSPSPDDFPGGGDHDYAESQPSGGCGGWP. A compositionally biased stretch (basic and acidic residues) spans 230–242; it reads GSADRDSMPRLHT.

As to quaternary structure, interacts with NAC048 and NAC002. As to expression, expressed in roots and embryo. Weakly expressed in callus.

The protein localises to the nucleus. Functionally, transcription activator that binds to the promoter of the stress response gene LEA19. Involved in tolerance to abiotic stresses. The sequence is that of NAC domain-containing protein 71 from Oryza sativa subsp. japonica (Rice).